The primary structure comprises 482 residues: Adenylosuccinate lyase (482 aa).

Substrate-binding positions include 14 to 15, 82 to 84, and 108 to 109; these read RY, RHD, and TS. Catalysis depends on H156, which acts as the Proton donor/acceptor. Q238 contacts substrate. The Proton donor/acceptor role is filled by S286. The substrate site is built by R300, R326, S331, and R335.

It belongs to the lyase 1 family. Adenylosuccinate lyase subfamily. In terms of assembly, homotetramer. Residues from neighboring subunits contribute catalytic and substrate-binding residues to each active site.

It catalyses the reaction N(6)-(1,2-dicarboxyethyl)-AMP = fumarate + AMP. It carries out the reaction (2S)-2-[5-amino-1-(5-phospho-beta-D-ribosyl)imidazole-4-carboxamido]succinate = 5-amino-1-(5-phospho-beta-D-ribosyl)imidazole-4-carboxamide + fumarate. Its pathway is purine metabolism; AMP biosynthesis via de novo pathway; AMP from IMP: step 2/2. It functions in the pathway purine metabolism; IMP biosynthesis via de novo pathway; 5-amino-1-(5-phospho-D-ribosyl)imidazole-4-carboxamide from 5-amino-1-(5-phospho-D-ribosyl)imidazole-4-carboxylate: step 2/2. The sequence is that of Adenylosuccinate lyase (ade8) from Schizosaccharomyces pombe (strain 972 / ATCC 24843) (Fission yeast).